The following is a 78-amino-acid chain: DNA-directed RNA polymerase subunit Rpo5 (78 aa).

The protein belongs to the archaeal Rpo5/eukaryotic RPB5 RNA polymerase subunit family. As to quaternary structure, part of the RNA polymerase complex.

The protein localises to the cytoplasm. The catalysed reaction is RNA(n) + a ribonucleoside 5'-triphosphate = RNA(n+1) + diphosphate. Functionally, DNA-dependent RNA polymerase (RNAP) catalyzes the transcription of DNA into RNA using the four ribonucleoside triphosphates as substrates. The protein is DNA-directed RNA polymerase subunit Rpo5 of Methanosarcina barkeri (strain Fusaro / DSM 804).